Reading from the N-terminus, the 301-residue chain is Mas-related G-protein coupled receptor member A6 (301 aa).

Residues 1 to 15 (MHRSISIRILITNLM) lie on the Extracellular side of the membrane. A helical transmembrane segment spans residues 16-36 (IVILGLVGLTGNAIVFWLLLF). Over 37-42 (RLRRNA) the chain is Cytoplasmic. The chain crosses the membrane as a helical span at residues 43-63 (FSIYILNLALADFLFLLCHII). Topologically, residues 64–77 (ASTEHILTFSSPNS) are extracellular. Residues 78–98 (IFINCLYTFRVLLYIAGLNML) form a helical membrane-spanning segment. Over 99–128 (SAISIERCLSVMCPIWYRCHRPEHTSTVMC) the chain is Cytoplasmic. A helical membrane pass occupies residues 129–149 (AMIWVLSLLLCILYRYFCGFL). Over 150–163 (DTKYEDDYGCLAMN) the chain is Extracellular. The helical transmembrane segment at 164 to 184 (FLTTAYLMFLFVVLCVSSLAL) threads the bilayer. Residues 185–203 (LARLFCGAGRMKLTRLYVT) are Cytoplasmic-facing. The chain crosses the membrane as a helical span at residues 204-224 (ITLTLLVFLLCGLPCGFYWFL). Residues 225-240 (LSKIKNVFSVFEFSLY) lie on the Extracellular side of the membrane. Residues 241–261 (LTSVVLTAINSCANPIIYFFV) traverse the membrane as a helical segment. The Cytoplasmic portion of the chain corresponds to 262–301 (GSFRHRLKHQTLKMVLQSALQDTPETPENMVEMSRNKAEL).

This sequence belongs to the G-protein coupled receptor 1 family. Mas subfamily. In terms of tissue distribution, expressed in a subset of sensory neurons that includes nociceptors. Expressed in the subclass of non-peptidergic sensory neurons that are IB4(+) and VR1(-).

The protein resides in the cell membrane. In terms of biological role, orphan receptor. May be a receptor for RFamide-family neuropeptides such as NPFF and NPAF, which are analgesic in vivo. May regulate nociceptor function and/or development, including the sensation or modulation of pain. The chain is Mas-related G-protein coupled receptor member A6 (Mrgpra6) from Mus musculus (Mouse).